A 347-amino-acid polypeptide reads, in one-letter code: Dihydroorotase (347 aa).

Residues histidine 14 and histidine 16 each contribute to the Zn(2+) site. Residues 16 to 18 (HLR) and asparagine 42 contribute to the substrate site. Residues lysine 100, histidine 137, and histidine 175 each contribute to the Zn(2+) site. Lysine 100 bears the N6-carboxylysine mark. Histidine 137 contacts substrate. Position 220 (leucine 220) interacts with substrate. Aspartate 248 is a binding site for Zn(2+). Aspartate 248 is an active-site residue. Substrate-binding residues include histidine 252 and alanine 264.

This sequence belongs to the metallo-dependent hydrolases superfamily. DHOase family. Class II DHOase subfamily. As to quaternary structure, homodimer. The cofactor is Zn(2+).

The catalysed reaction is (S)-dihydroorotate + H2O = N-carbamoyl-L-aspartate + H(+). The protein operates within pyrimidine metabolism; UMP biosynthesis via de novo pathway; (S)-dihydroorotate from bicarbonate: step 3/3. In terms of biological role, catalyzes the reversible cyclization of carbamoyl aspartate to dihydroorotate. This is Dihydroorotase from Pseudomonas syringae pv. syringae (strain B728a).